Here is a 451-residue protein sequence, read N- to C-terminus: Phosphoglucosamine mutase (451 aa).

S107 serves as the catalytic Phosphoserine intermediate. Mg(2+) is bound by residues S107, D246, D248, and D250. Position 107 is a phosphoserine (S107).

This sequence belongs to the phosphohexose mutase family. Mg(2+) serves as cofactor. Activated by phosphorylation.

The catalysed reaction is alpha-D-glucosamine 1-phosphate = D-glucosamine 6-phosphate. In terms of biological role, catalyzes the conversion of glucosamine-6-phosphate to glucosamine-1-phosphate. The sequence is that of Phosphoglucosamine mutase from Burkholderia multivorans (strain ATCC 17616 / 249).